We begin with the raw amino-acid sequence, 146 residues long: Hemoglobin cathodic subunit beta (146 aa).

The 145-residue stretch at 2 to 146 folds into the Globin domain; it reads QWSSSERSVI…VVSGLSKQYF (145 aa). His63 is a binding site for heme b.

In terms of assembly, heterotetramer of two alpha and two beta chains. As to expression, red blood cells.

Involved in oxygen transport from the gills to various peripheral tissues. The chain is Hemoglobin cathodic subunit beta from Ophisurus serpens (Serpent eel).